The chain runs to 328 residues: Phenylalanine--tRNA ligase alpha subunit (328 aa).

E245 provides a ligand contact to Mg(2+).

Belongs to the class-II aminoacyl-tRNA synthetase family. Phe-tRNA synthetase alpha subunit type 1 subfamily. In terms of assembly, tetramer of two alpha and two beta subunits. Requires Mg(2+) as cofactor.

The protein localises to the cytoplasm. It catalyses the reaction tRNA(Phe) + L-phenylalanine + ATP = L-phenylalanyl-tRNA(Phe) + AMP + diphosphate + H(+). This is Phenylalanine--tRNA ligase alpha subunit from Helicobacter pylori (strain P12).